A 139-amino-acid chain; its full sequence is uncharacterized protein (139 aa).

This is an uncharacterized protein from Aquifex aeolicus (strain VF5).